A 341-amino-acid chain; its full sequence is Methionine import ATP-binding protein MetN 2 (341 aa).

Positions 2–241 constitute an ABC transporter domain; it reads IQFKNISKHY…PQHPTTKTFI (240 aa). An ATP-binding site is contributed by 38–45; sequence GYSGAGKS.

This sequence belongs to the ABC transporter superfamily. Methionine importer (TC 3.A.1.24) family. As to quaternary structure, the complex is composed of two ATP-binding proteins (MetN), two transmembrane proteins (MetI) and a solute-binding protein (MetQ).

Its subcellular location is the cell inner membrane. It carries out the reaction L-methionine(out) + ATP + H2O = L-methionine(in) + ADP + phosphate + H(+). The enzyme catalyses D-methionine(out) + ATP + H2O = D-methionine(in) + ADP + phosphate + H(+). Functionally, part of the ABC transporter complex MetNIQ involved in methionine import. Responsible for energy coupling to the transport system. This chain is Methionine import ATP-binding protein MetN 2, found in Acinetobacter baylyi (strain ATCC 33305 / BD413 / ADP1).